Consider the following 148-residue polypeptide: Phosphopantetheine adenylyltransferase (148 aa).

This sequence belongs to the eukaryotic CoaD family.

It is found in the cytoplasm. It carries out the reaction (R)-4'-phosphopantetheine + ATP + H(+) = 3'-dephospho-CoA + diphosphate. The protein operates within cofactor biosynthesis; coenzyme A biosynthesis. Functionally, reversibly transfers an adenylyl group from ATP to 4'-phosphopantetheine, yielding dephospho-CoA (dPCoA) and pyrophosphate. This is Phosphopantetheine adenylyltransferase from Archaeoglobus fulgidus (strain ATCC 49558 / DSM 4304 / JCM 9628 / NBRC 100126 / VC-16).